Consider the following 754-residue polypeptide: DNA topoisomerase 4 subunit A (754 aa).

Residues 38-501 (LPHIGDGLKP…EARALSETEL (464 aa)) form the Topo IIA-type catalytic domain. Tyrosine 127 (O-(5'-phospho-DNA)-tyrosine intermediate) is an active-site residue.

It belongs to the type II topoisomerase GyrA/ParC subunit family. ParC type 1 subfamily. In terms of assembly, heterotetramer composed of ParC and ParE.

The protein localises to the cell membrane. The catalysed reaction is ATP-dependent breakage, passage and rejoining of double-stranded DNA.. In terms of biological role, topoisomerase IV is essential for chromosome segregation. It relaxes supercoiled DNA. Performs the decatenation events required during the replication of a circular DNA molecule. This is DNA topoisomerase 4 subunit A from Pseudomonas aeruginosa (strain ATCC 15692 / DSM 22644 / CIP 104116 / JCM 14847 / LMG 12228 / 1C / PRS 101 / PAO1).